A 147-amino-acid polypeptide reads, in one-letter code: D-aminoacyl-tRNA deacylase (147 aa).

The short motif at 136–137 (GP) is the Gly-cisPro motif, important for rejection of L-amino acids element.

Belongs to the DTD family. As to quaternary structure, homodimer.

The protein localises to the cytoplasm. It carries out the reaction glycyl-tRNA(Ala) + H2O = tRNA(Ala) + glycine + H(+). The enzyme catalyses a D-aminoacyl-tRNA + H2O = a tRNA + a D-alpha-amino acid + H(+). Functionally, an aminoacyl-tRNA editing enzyme that deacylates mischarged D-aminoacyl-tRNAs. Also deacylates mischarged glycyl-tRNA(Ala), protecting cells against glycine mischarging by AlaRS. Acts via tRNA-based rather than protein-based catalysis; rejects L-amino acids rather than detecting D-amino acids in the active site. By recycling D-aminoacyl-tRNA to D-amino acids and free tRNA molecules, this enzyme counteracts the toxicity associated with the formation of D-aminoacyl-tRNA entities in vivo and helps enforce protein L-homochirality. The protein is D-aminoacyl-tRNA deacylase of Streptococcus equi subsp. zooepidemicus (strain MGCS10565).